The chain runs to 543 residues: MAKQLIYDVKAREALLSGVNILADAVKVTLGPKGRNVVIEKAFGGPTVTKDGVTVAKEIELEDKFENMGAQMVKEVASKTSDVAGDGTTTATILAQSIYYEGSKLVAAGANPMALKRGIEKAVQVVVDELKKISKPTKDQKEIAQVGTISANNDPTIGNIIAEAMNKVGKEGVITVEEAKAMETTLEVVEGMQFDRGYISPYFVTDPEKMEVLLNEPLILINEKKISNMKDLLPVLEQIAKMGRPLLIIAEDVEGEALATLVVNKLRGTLHVCAVKAPGFGDRRKAMLDDIAILTGGQVISEEKGIKLESVGLNDLGKAKTIRIDKDNTTIVDGAGDRKALEGRVRQIRTQIDETTSDYDREKLQERLAKMVGGVAVISVGAATETEMKEKKARVEDALNATRAAVEEGIVPGGGVAYLRCLGALGAVNLEGDEKLGLNIVKRALEEPARQIAMNAGEEGSVIVQRVKSETGAFGFDAETSQFCDLIEAGVIDPTKVTRTALLNAASVSALMLTTECMVSEIPKEDKGAPAGMGGMPPGGGMY.

ATP contacts are provided by residues 29-32 (TLGP), K50, 86-90 (DGTTT), G414, and D493. Positions 524 to 543 (KEDKGAPAGMGGMPPGGGMY) are disordered. Residues 531-543 (AGMGGMPPGGGMY) show a composition bias toward gly residues.

The protein belongs to the chaperonin (HSP60) family. In terms of assembly, forms a cylinder of 14 subunits composed of two heptameric rings stacked back-to-back. Interacts with the co-chaperonin GroES.

The protein resides in the cytoplasm. It catalyses the reaction ATP + H2O + a folded polypeptide = ADP + phosphate + an unfolded polypeptide.. Functionally, together with its co-chaperonin GroES, plays an essential role in assisting protein folding. The GroEL-GroES system forms a nano-cage that allows encapsulation of the non-native substrate proteins and provides a physical environment optimized to promote and accelerate protein folding. The chain is Chaperonin GroEL 1 from Syntrophobacter fumaroxidans (strain DSM 10017 / MPOB).